Consider the following 335-residue polypeptide: Succinylglutamate desuccinylase (335 aa).

Residues H59, E62, and H151 each coordinate Zn(2+). Residue E215 is part of the active site.

This sequence belongs to the AspA/AstE family. Succinylglutamate desuccinylase subfamily. Zn(2+) serves as cofactor.

The catalysed reaction is N-succinyl-L-glutamate + H2O = L-glutamate + succinate. It participates in amino-acid degradation; L-arginine degradation via AST pathway; L-glutamate and succinate from L-arginine: step 5/5. In terms of biological role, transforms N(2)-succinylglutamate into succinate and glutamate. In Pseudomonas syringae pv. tomato (strain ATCC BAA-871 / DC3000), this protein is Succinylglutamate desuccinylase.